We begin with the raw amino-acid sequence, 136 residues long: Holo-[acyl-carrier-protein] synthase (136 aa).

Mg(2+) is bound by residues Asp8 and Glu57.

Belongs to the P-Pant transferase superfamily. AcpS family. Mg(2+) serves as cofactor.

The protein localises to the cytoplasm. The enzyme catalyses apo-[ACP] + CoA = holo-[ACP] + adenosine 3',5'-bisphosphate + H(+). Transfers the 4'-phosphopantetheine moiety from coenzyme A to a Ser of acyl-carrier-protein. The sequence is that of Holo-[acyl-carrier-protein] synthase from Methylorubrum populi (strain ATCC BAA-705 / NCIMB 13946 / BJ001) (Methylobacterium populi).